The chain runs to 311 residues: Dihydroorotate dehydrogenase A (fumarate) (311 aa).

FMN contacts are provided by residues serine 19 and 43–44 (KS). Substrate contacts are provided by residues lysine 43, 67 to 71 (NSMGL), and asparagine 127. Asparagine 127 serves as a coordination point for FMN. Cysteine 130 functions as the Nucleophile in the catalytic mechanism. Residues lysine 164 and valine 192 each contribute to the FMN site. 193-194 (NS) serves as a coordination point for substrate. FMN is bound by residues glycine 221, 249 to 250 (GG), and 271 to 272 (GT).

The protein belongs to the dihydroorotate dehydrogenase family. Type 1 subfamily. Homodimer. It depends on FMN as a cofactor.

Its subcellular location is the cytoplasm. It catalyses the reaction (S)-dihydroorotate + fumarate = orotate + succinate. Its pathway is pyrimidine metabolism; UMP biosynthesis via de novo pathway. In terms of biological role, catalyzes the conversion of dihydroorotate to orotate with fumarate as the electron acceptor. The sequence is that of Dihydroorotate dehydrogenase A (fumarate) (pyrDA) from Lactococcus lactis subsp. lactis (strain IL1403) (Streptococcus lactis).